The chain runs to 89 residues: Acylphosphatase (89 aa).

Residues 4-89 (SYIAHISGRV…WQEHHFFSIG (86 aa)) form the Acylphosphatase-like domain. Residues Arg19 and Asn37 contribute to the active site.

It belongs to the acylphosphatase family.

It carries out the reaction an acyl phosphate + H2O = a carboxylate + phosphate + H(+). This chain is Acylphosphatase (acyP), found in Colwellia psychrerythraea (strain 34H / ATCC BAA-681) (Vibrio psychroerythus).